The following is a 63-amino-acid chain: Large ribosomal subunit protein uL30 (63 aa).

It belongs to the universal ribosomal protein uL30 family. Part of the 50S ribosomal subunit.

The chain is Large ribosomal subunit protein uL30 from Xanthomonas axonopodis pv. citri (strain 306).